The sequence spans 196 residues: UPF0314 protein Oant_0840 (196 aa).

4 helical membrane passes run 15–35, 65–85, 127–147, and 151–171; these read WGLG…WLYF, WYTL…TVIA, FGDS…GFLI, and LPTK…LIVI.

It belongs to the UPF0314 family.

Its subcellular location is the cell membrane. The chain is UPF0314 protein Oant_0840 from Brucella anthropi (strain ATCC 49188 / DSM 6882 / CCUG 24695 / JCM 21032 / LMG 3331 / NBRC 15819 / NCTC 12168 / Alc 37) (Ochrobactrum anthropi).